A 150-amino-acid chain; its full sequence is Dual specificity protein phosphatase 23 (150 aa).

In terms of domain architecture, Tyrosine-protein phosphatase spans 7–150 (NFSWVLPGRL…AVFQFYQRTK (144 aa)). The active-site Phosphocysteine intermediate is cysteine 95.

Belongs to the protein-tyrosine phosphatase family. Non-receptor class dual specificity subfamily. As to expression, widely expressed.

It is found in the cytoplasm. Its subcellular location is the cytosol. The protein localises to the nucleus. It catalyses the reaction O-phospho-L-tyrosyl-[protein] + H2O = L-tyrosyl-[protein] + phosphate. The catalysed reaction is O-phospho-L-seryl-[protein] + H2O = L-seryl-[protein] + phosphate. It carries out the reaction O-phospho-L-threonyl-[protein] + H2O = L-threonyl-[protein] + phosphate. Protein phosphatase that mediates dephosphorylation of proteins phosphorylated on Tyr and Ser/Thr residues. In vitro, it can dephosphorylate p44-ERK1 (MAPK3) but not p54 SAPK-beta (MAPK10) in vitro. Able to enhance activation of JNK and p38 (MAPK14). This is Dual specificity protein phosphatase 23 (Dusp23) from Mus musculus (Mouse).